We begin with the raw amino-acid sequence, 200 residues long: Integrin beta-1-binding protein 1 (200 aa).

The span at 1-10 (MFRKGKKRHS) shows a compositional bias: basic residues. A disordered region spans residues 1–55 (MFRKGKKRHSSSSSQSSEISTKSKSVDSSLGGLSRSSTVASLDTDSTKSSGQSNS). A Nuclear localization signal motif is present at residues 6–7 (KK). Positions 11–29 (SSSSQSSEISTKSKSVDSS) are enriched in low complexity. Positions 34-55 (SRSSTVASLDTDSTKSSGQSNS) are enriched in polar residues. The residue at position 38 (Thr-38) is a Phosphothreonine; by CaMK2. At Ser-41 the chain carries Phosphoserine. A PID domain is found at 58–200 (DTCAEFRIKY…FDSVLTSDKS (143 aa)). The segment at 136 to 139 (YLII) is interaction with KRIT1. The interval 139–141 (IRM) is interaction with ITGB1.

In terms of assembly, found in a complex, at least composed of ITGB1BP1, KRIT1 and RAP1A. Interacts (via C-terminal region) with ITGB1 (via C-terminal cytoplasmic tail); the interaction prevents talin TLN1 binding to ITGB1 and KRIT1 and ITGB1 compete for the same binding site. Interacts with KRIT1 (via N-terminal NPXY motif); the interaction induces the opening conformation of KRIT1 and KRIT1 and ITGB1 compete for the same binding site. Isoform 2 does not interact with ITGB1. Interacts with CDC42 (GTP- or GDP-bound form); the interaction is increased with the CDC42-membrane bound forms and prevents both CDC42 activation and cell spreading. Interacts (via C-terminal domain region) with NME2. Interacts with FERMT2 and RAC1. Interacts (via N-terminus and PTB domain) with ROCK1. In terms of processing, phosphorylation at Thr-38 seems to enhance integrin alpha5beta1-mediated cell adhesion. The degree of phosphorylation is regulated by integrin-dependent cell-matrix interaction. As to expression, expressed in the brain.

The protein localises to the nucleus. It is found in the cytoplasm. It localises to the cytoskeleton. The protein resides in the cell membrane. Its subcellular location is the cell projection. The protein localises to the lamellipodium. It is found in the ruffle. Its function is as follows. Key regulator of the integrin-mediated cell-matrix interaction signaling by binding to the ITGB1 cytoplasmic tail and preventing the activation of integrin alpha-5/beta-1 (heterodimer of ITGA5 and ITGB1) by talin or FERMT1. Plays a role in cell proliferation, differentiation, spreading, adhesion and migration in the context of mineralization and bone development and angiogenesis. Stimulates cellular proliferation in a fibronectin-dependent manner. Involved in the regulation of beta-1 integrin-containing focal adhesion (FA) site dynamics by controlling its assembly rate during cell adhesion; inhibits beta-1 integrin clustering within FA by directly competing with talin TLN1, and hence stimulates osteoblast spreading and migration in a fibronectin- and/or collagen-dependent manner. Acts as a guanine nucleotide dissociation inhibitor (GDI) by regulating Rho family GTPases during integrin-mediated cell matrix adhesion; reduces the level of active GTP-bound form of both CDC42 and RAC1 GTPases upon cell adhesion to fibronectin. Stimulates the release of active CDC42 from the membranes to maintain it in an inactive cytoplasmic pool. Participates in the translocation of the Rho-associated protein kinase ROCK1 to membrane ruffles at cell leading edges of the cell membrane, leading to an increase of myoblast cell migration on laminin. Plays a role in bone mineralization at a late stage of osteoblast differentiation; modulates the dynamic formation of focal adhesions into fibrillar adhesions, which are adhesive structures responsible for fibronectin deposition and fibrillogenesis. Plays a role in blood vessel development; acts as a negative regulator of angiogenesis by attenuating endothelial cell proliferation and migration, lumen formation and sprouting angiogenesis by promoting AKT phosphorylation and inhibiting ERK1/2 phosphorylation through activation of the Notch signaling pathway. Promotes transcriptional activity of the MYC promoter. The protein is Integrin beta-1-binding protein 1 (Itgb1bp1) of Mus musculus (Mouse).